Reading from the N-terminus, the 1838-residue chain is Collagen alpha-1(V) chain (1838 aa).

Residues 1-37 (MDVHTRWKARSALRPGAPLLPPLLLLLLWAPPPSRAA) form the signal peptide. A Laminin G-like domain is found at 72 to 244 (DVAYRVTKDA…DYCEHYSPDC (173 aa)). Residues 231 to 443 (RAAYDYCEHY…MPANQDTIYE (213 aa)) form a nonhelical region region. A sulfotyrosine mark is found at tyrosine 234, tyrosine 236, tyrosine 240, tyrosine 262, and tyrosine 263. Disordered regions lie at residues 242-269 (PDCDTAVPDTPQSQDPNPDEYYTEGDGE), 281-457 (EDPE…QKGE), 470-520 (PPGP…GTML), 526-545 (FGGGGDAGSKGPMVSAQESQ), and 559-1574 (GPAG…EVIQ). Positions 258–269 (NPDEYYTEGDGE) are enriched in acidic residues. Positions 285 to 304 (DLGKEPTPSKKPVEAAKETT) are enriched in basic and acidic residues. Low complexity predominate over residues 309–323 (ELTPTPTEAAPMPET). 4 positions are modified to sulfotyrosine: tyrosine 338, tyrosine 340, tyrosine 346, and tyrosine 347. The span at 377-388 (PTSTADTSNSSN) shows a compositional bias: polar residues. Positions 396 to 406 (GADDLEGEFTE) are enriched in acidic residues. Tyrosine 416, tyrosine 417, tyrosine 420, and tyrosine 421 each carry sulfotyrosine. Positions 417–428 (YDPYYDPTSSPS) are enriched in low complexity. The tract at residues 444–558 (GIGGPRGEKG…ILQQARLALR (115 aa)) is interrupted collagenous region. Over residues 470–485 (PPGPEGPAGLPGPPGT) the composition is skewed to pro residues. Positions 506 to 520 (LPGADGLPGPPGTML) are enriched in low complexity. A triple-helical region region spans residues 559–1570 (GPAGPMGLTG…GPPGPPGPPG (1012 aa)). Hydroxyproline is present on residues proline 570 and proline 576. The segment covering 587-597 (DVGPQGPRGVQ) has biased composition (low complexity). Hydroxyproline is present on proline 621. 5-hydroxylysine is present on lysine 627. Hydroxyproline is present on proline 639. Lysine 642 is modified (5-hydroxylysine). Hydroxyproline is present on residues proline 648, proline 654, proline 657, proline 675, and proline 678. Low complexity predominate over residues 671–686 (PRGLPGEPGPRGLLGP). Lysine 687 bears the 5-hydroxylysine mark. Over residues 687-696 (KGPPGPPGPP) the composition is skewed to pro residues. Proline 690, proline 696, and proline 705 each carry hydroxyproline. 5-hydroxylysine is present on lysine 708. 4 positions are modified to hydroxyproline: proline 717, proline 720, proline 726, and proline 732. The span at 722 to 741 (QQGNPGAQGLPGPQGAIGPP) shows a compositional bias: low complexity. Lysine 744 is subject to 5-hydroxylysine. Residues 747–756 (LGKPGLPGMP) show a composition bias toward low complexity. Hydroxyproline occurs at positions 750, 756, 762, 765, and 771. At lysine 774 the chain carries 5-hydroxylysine. 2 positions are modified to hydroxyproline: proline 780 and proline 789. 5-hydroxylysine is present on residues lysine 795, lysine 804, lysine 807, and lysine 810. Hydroxyproline is present on proline 816. 5-hydroxylysine is present on lysine 819. Hydroxyproline is present on proline 834. Residues 837–846 (RGEDGPEGPK) are compositionally biased toward basic and acidic residues. Residue lysine 846 is modified to 5-hydroxylysine. At proline 861 the chain carries Hydroxyproline. At lysine 864 the chain carries 5-hydroxylysine. Over residues 867-876 (LGVPGLPGYP) the composition is skewed to low complexity. A hydroxyproline mark is found at proline 870, proline 873, and proline 876. Position 882 is a 5-hydroxylysine (lysine 882). 2 positions are modified to hydroxyproline: proline 888 and proline 891. Lysine 897 is modified (5-hydroxylysine). Proline 903 and proline 906 each carry hydroxyproline. The span at 908-917 (PRGQRGPTGP) shows a compositional bias: low complexity. Proline 930 and proline 945 each carry hydroxyproline. Composition is skewed to low complexity over residues 971–990 (KDGLPGHPGQRGETGFQGKT) and 999–1011 (VGPQGPTGETGPM). Hydroxyproline is present on residues proline 1017, proline 1020, proline 1023, and proline 1029. The segment covering 1088–1104 (SPGERGPAGAAGPIGIP) has biased composition (low complexity). A compositionally biased stretch (pro residues) spans 1106-1115 (RPGPQGPPGP). A compositionally biased stretch (low complexity) spans 1116–1140 (AGEKGAPGEKGPQGPAGRDGLQGPV). 2 positions are modified to hydroxyproline: proline 1221 and proline 1224. The segment covering 1259 to 1268 (PSGAPGADGP) has biased composition (low complexity). Composition is skewed to pro residues over residues 1380–1398 (TGEPGPSGPPGKRGPPGPA) and 1454–1469 (SPGPDGPPGPMGPPGL). Hydroxyproline occurs at positions 1467 and 1470. A compositionally biased stretch (low complexity) spans 1485 to 1494 (PGLIGLIGPP). A compositionally biased stretch (pro residues) spans 1526–1541 (PIGPPGPPGLPGPPGP). The span at 1542-1554 (KGAKGSSGPTGPK) shows a compositional bias: low complexity. The span at 1560–1569 (PGPPGPPGPP) shows a compositional bias: pro residues. A nonhelical region region spans residues 1571-1605 (EVIQPLPIQASRTRRNIDASQLLDDGNGENYVDYA). Residues tyrosine 1601 and tyrosine 1604 each carry the sulfotyrosine modification. A propeptide spans 1606 to 1838 (DGMEEIFGSL…FEVGPACFMG (233 aa)) (C-terminal propeptide). The region spanning 1609–1837 (EEIFGSLNSL…GFEVGPACFM (229 aa)) is the Fibrillar collagen NC1 domain. Intrachain disulfides connect cysteine 1639–cysteine 1671, cysteine 1680–cysteine 1835, and cysteine 1746–cysteine 1789. Aspartate 1657, asparagine 1659, glutamine 1660, cysteine 1662, and aspartate 1665 together coordinate Ca(2+).

Belongs to the fibrillar collagen family. Trimers of two alpha 1(V) and one alpha 2(V) chains in most tissues and trimers of one alpha 1(V), one alpha 2(V), and one alpha 3(V) chains in placenta. Interacts with CSPG4. Prolines at the third position of the tripeptide repeating unit (G-X-Y) are hydroxylated in some or all of the chains. In terms of processing, sulfated on 40% of tyrosines.

It is found in the secreted. The protein resides in the extracellular space. The protein localises to the extracellular matrix. In terms of biological role, type V collagen is a member of group I collagen (fibrillar forming collagen). It is a minor connective tissue component of nearly ubiquitous distribution. Type V collagen binds to DNA, heparan sulfate, thrombospondin, heparin, and insulin. The chain is Collagen alpha-1(V) chain (COL5A1) from Homo sapiens (Human).